The chain runs to 379 residues: Probable RNA methyltransferase RB6963 (379 aa).

The active-site Proton acceptor is the E89. The region spanning 96–332 is the Radical SAM core domain; sequence ATGRTTLCVS…VRYSLGNDIE (237 aa). C103 and C335 are disulfide-bonded. 3 residues coordinate [4Fe-4S] cluster: C110, C114, and C117. Residues 160–161, S192, 215–217, and N291 each bind S-adenosyl-L-methionine; these read GE and SLH. C335 serves as the catalytic S-methylcysteine intermediate.

It belongs to the radical SAM superfamily. RlmN family. [4Fe-4S] cluster is required as a cofactor.

Its subcellular location is the cytoplasm. The chain is Probable RNA methyltransferase RB6963 from Rhodopirellula baltica (strain DSM 10527 / NCIMB 13988 / SH1).